Here is a 115-residue protein sequence, read N- to C-terminus: Large ribosomal subunit protein bL20 (115 aa).

This sequence belongs to the bacterial ribosomal protein bL20 family.

In terms of biological role, binds directly to 23S ribosomal RNA and is necessary for the in vitro assembly process of the 50S ribosomal subunit. It is not involved in the protein synthesizing functions of that subunit. In Synechococcus sp. (strain CC9902), this protein is Large ribosomal subunit protein bL20.